The sequence spans 83 residues: Putative cytochrome b5 B11H24.095 (83 aa).

The Cytochrome b5 heme-binding domain occupies 2-78 (SQTFTKSQVA…GTKLKVGTLA (77 aa)). Heme-binding residues include His-37 and His-60.

The protein belongs to the cytochrome b5 family.

This chain is Putative cytochrome b5 B11H24.095, found in Neurospora crassa (strain ATCC 24698 / 74-OR23-1A / CBS 708.71 / DSM 1257 / FGSC 987).